Consider the following 221-residue polypeptide: Histidine biosynthesis bifunctional protein HisIE (221 aa).

The segment at 1–129 (MAYSKNFSIE…AKKTSPFSNI (129 aa)) is phosphoribosyl-AMP cyclohydrolase. The segment at 130 to 221 (CSELFDTLHE…VLESRRGKNN (92 aa)) is phosphoribosyl-ATP pyrophosphohydrolase.

It in the N-terminal section; belongs to the PRA-CH family. The protein in the C-terminal section; belongs to the PRA-PH family.

It is found in the cytoplasm. The catalysed reaction is 1-(5-phospho-beta-D-ribosyl)-ATP + H2O = 1-(5-phospho-beta-D-ribosyl)-5'-AMP + diphosphate + H(+). The enzyme catalyses 1-(5-phospho-beta-D-ribosyl)-5'-AMP + H2O = 1-(5-phospho-beta-D-ribosyl)-5-[(5-phospho-beta-D-ribosylamino)methylideneamino]imidazole-4-carboxamide. It participates in amino-acid biosynthesis; L-histidine biosynthesis; L-histidine from 5-phospho-alpha-D-ribose 1-diphosphate: step 2/9. It functions in the pathway amino-acid biosynthesis; L-histidine biosynthesis; L-histidine from 5-phospho-alpha-D-ribose 1-diphosphate: step 3/9. The protein is Histidine biosynthesis bifunctional protein HisIE of Prochlorococcus marinus subsp. pastoris (strain CCMP1986 / NIES-2087 / MED4).